We begin with the raw amino-acid sequence, 284 residues long: 4-diphosphocytidyl-2-C-methyl-D-erythritol kinase (284 aa).

The active site involves K14. 98-108 (PMGGGLGGGSS) lines the ATP pocket. Residue D140 is part of the active site.

The protein belongs to the GHMP kinase family. IspE subfamily.

It carries out the reaction 4-CDP-2-C-methyl-D-erythritol + ATP = 4-CDP-2-C-methyl-D-erythritol 2-phosphate + ADP + H(+). It functions in the pathway isoprenoid biosynthesis; isopentenyl diphosphate biosynthesis via DXP pathway; isopentenyl diphosphate from 1-deoxy-D-xylulose 5-phosphate: step 3/6. In terms of biological role, catalyzes the phosphorylation of the position 2 hydroxy group of 4-diphosphocytidyl-2C-methyl-D-erythritol. The protein is 4-diphosphocytidyl-2-C-methyl-D-erythritol kinase of Shewanella sp. (strain MR-7).